The sequence spans 122 residues: Large ribosomal subunit protein uL14 (122 aa).

The protein belongs to the universal ribosomal protein uL14 family. As to quaternary structure, part of the 50S ribosomal subunit. Forms a cluster with proteins L3 and L19. In the 70S ribosome, L14 and L19 interact and together make contacts with the 16S rRNA in bridges B5 and B8.

In terms of biological role, binds to 23S rRNA. Forms part of two intersubunit bridges in the 70S ribosome. This chain is Large ribosomal subunit protein uL14, found in Acaryochloris marina (strain MBIC 11017).